The chain runs to 307 residues: Methionyl-tRNA formyltransferase (307 aa).

108 to 111 (SLLP) serves as a coordination point for (6S)-5,6,7,8-tetrahydrofolate.

The protein belongs to the Fmt family.

It catalyses the reaction L-methionyl-tRNA(fMet) + (6R)-10-formyltetrahydrofolate = N-formyl-L-methionyl-tRNA(fMet) + (6S)-5,6,7,8-tetrahydrofolate + H(+). In terms of biological role, attaches a formyl group to the free amino group of methionyl-tRNA(fMet). The formyl group appears to play a dual role in the initiator identity of N-formylmethionyl-tRNA by promoting its recognition by IF2 and preventing the misappropriation of this tRNA by the elongation apparatus. The polypeptide is Methionyl-tRNA formyltransferase (Xylella fastidiosa (strain M23)).